The primary structure comprises 199 residues: Transgelin-3 (199 aa).

One can recognise a Calponin-homology (CH) domain in the interval 24–136 (ADLENKLVDW…RTLMALGSVA (113 aa)). Phosphoserine is present on S163. Residues 174-199 (IGLQMGSNKGASQAGMTGYGMPRQIM) form a Calponin-like repeat. Polar residues predominate over residues 176-188 (LQMGSNKGASQAG). A disordered region spans residues 176 to 199 (LQMGSNKGASQAGMTGYGMPRQIM).

This sequence belongs to the calponin family. Widely expressed in the brain. Expression is increased in the superior frontal cortex of alcoholics, but not in the motor cortex or cerebellum.

The sequence is that of Transgelin-3 (TAGLN3) from Homo sapiens (Human).